Here is a 48-residue protein sequence, read N- to C-terminus: Protein YgdT (48 aa).

In Escherichia coli (strain K12), this protein is Protein YgdT (ygdT).